The chain runs to 408 residues: RNA exonuclease 4 (408 aa).

Residues 27–70 (TKEKDVSNSKAHNSRSSQSPSSSLRSSSRIQRKSKHSQGVGQYM) are disordered. Over residues 40–55 (SRSSQSPSSSLRSSSR) the composition is skewed to low complexity. Positions 131 to 292 (QYLAIDCEMV…YRLHKKEWER (162 aa)) constitute an Exonuclease domain. The span at 310–322 (PEHVLGKRGHDEK) shows a compositional bias: basic and acidic residues. The interval 310-408 (PEHVLGKRGH…GESWWEQPAA (99 aa)) is disordered. Residues 343-357 (GNGGGRQQFPGGGRK) show a composition bias toward gly residues. A compositionally biased stretch (basic and acidic residues) spans 372–384 (QRVDENGRGDGTS).

Belongs to the REXO4 family.

It localises to the nucleus. Exoribonuclease involved in ribosome biosynthesis. Involved in the processing of ITS1, the internal transcribed spacer localized between the 18S and 5.8S rRNAs. The protein is RNA exonuclease 4 (REX4) of Cryptococcus neoformans var. neoformans serotype D (strain B-3501A) (Filobasidiella neoformans).